A 190-amino-acid chain; its full sequence is Elongation factor P-like protein (190 aa).

This sequence belongs to the elongation factor P family.

This Marinomonas sp. (strain MWYL1) protein is Elongation factor P-like protein.